The chain runs to 200 residues: Peptidyl-tRNA hydrolase (200 aa).

Position 15 (Tyr15) interacts with tRNA. Catalysis depends on His20, which acts as the Proton acceptor. Positions 66, 68, and 114 each coordinate tRNA.

The protein belongs to the PTH family. In terms of assembly, monomer.

The protein localises to the cytoplasm. The catalysed reaction is an N-acyl-L-alpha-aminoacyl-tRNA + H2O = an N-acyl-L-amino acid + a tRNA + H(+). Its function is as follows. Hydrolyzes ribosome-free peptidyl-tRNAs (with 1 or more amino acids incorporated), which drop off the ribosome during protein synthesis, or as a result of ribosome stalling. Functionally, catalyzes the release of premature peptidyl moieties from peptidyl-tRNA molecules trapped in stalled 50S ribosomal subunits, and thus maintains levels of free tRNAs and 50S ribosomes. The chain is Peptidyl-tRNA hydrolase from Paraburkholderia xenovorans (strain LB400).